Here is a 54-residue protein sequence, read N- to C-terminus: U1-ctenitoxin-Pr1a (54 aa).

Intrachain disulfides connect Cys-2-Cys-19, Cys-9-Cys-25, Cys-16-Cys-51, Cys-18-Cys-39, and Cys-27-Cys-37.

Expressed by the venom gland.

It is found in the secreted. In terms of biological role, omega-agatoxins are antagonists of voltage-gated calcium channels (Cav). Causes rapid general flaccid paralysis followed by death in 10-30 minutes when injected in mice at dose levels of 5 ug per mouse. This is U1-ctenitoxin-Pr1a from Phoneutria reidyi (Brazilian Amazonian armed spider).